A 377-amino-acid chain; its full sequence is Chaperone protein DnaJ (377 aa).

The J domain maps to D5–G69. The CR-type zinc-finger motif lies at G134–T216. Zn(2+) contacts are provided by C147, C150, C164, C167, C190, C193, C204, and C207. 4 CXXCXGXG motif repeats span residues C147–G154, C164–G171, C190–G197, and C204–G211.

Belongs to the DnaJ family. In terms of assembly, homodimer. Zn(2+) serves as cofactor.

The protein resides in the cytoplasm. Its function is as follows. Participates actively in the response to hyperosmotic and heat shock by preventing the aggregation of stress-denatured proteins and by disaggregating proteins, also in an autonomous, DnaK-independent fashion. Unfolded proteins bind initially to DnaJ; upon interaction with the DnaJ-bound protein, DnaK hydrolyzes its bound ATP, resulting in the formation of a stable complex. GrpE releases ADP from DnaK; ATP binding to DnaK triggers the release of the substrate protein, thus completing the reaction cycle. Several rounds of ATP-dependent interactions between DnaJ, DnaK and GrpE are required for fully efficient folding. Also involved, together with DnaK and GrpE, in the DNA replication of plasmids through activation of initiation proteins. The sequence is that of Chaperone protein DnaJ from Listeria monocytogenes serotype 1/2a (strain 10403S).